We begin with the raw amino-acid sequence, 248 residues long: Adenylate kinase isoenzyme 6 homolog HBR1 (248 aa).

The ATP site is built by Gly-19, Gly-21, Lys-22, Ser-23, and Ser-24. The interval 49-72 is NMPbind; it reads NISEIAKERDCIESYDAKLDTSIV. The interval 124-134 is LID; sequence TRNYNDLKLQE. An ATP-binding site is contributed by Arg-125. The disordered stretch occupies residues 188–248; it reads DGVSNELNKQ…EMEHTEDIAQ (61 aa). The segment covering 202-238 has biased composition (acidic residues); sequence DSSDEGDDNSDSDEYELEEDEQEEEEEREEYDEETNE. Positions 239 to 248 are enriched in basic and acidic residues; that stretch reads EMEHTEDIAQ.

Belongs to the adenylate kinase family. AK6 subfamily. As to quaternary structure, interacts with small ribosomal subunit protein uS11. Not a structural component of 43S pre-ribosomes, but transiently interacts with them by binding to uS11.

Its subcellular location is the cytoplasm. The protein localises to the nucleus. The catalysed reaction is AMP + ATP = 2 ADP. The enzyme catalyses ATP + H2O = ADP + phosphate + H(+). Broad-specificity nucleoside monophosphate (NMP) kinase that catalyzes the reversible transfer of the terminal phosphate group between nucleoside triphosphates and monophosphates. Also has ATPase activity. Involved in the late cytoplasmic maturation steps of the 40S ribosomal particles, specifically 18S rRNA maturation. While NMP activity is not required for ribosome maturation, ATPase activity is. Associates transiently with small ribosomal subunit protein uS11. ATP hydrolysis breaks the interaction with uS11. May temporarily remove uS11 from the ribosome to enable a conformational change of the ribosomal RNA that is needed for the final maturation step of the small ribosomal subunit. Its NMP activity may have a role in nuclear energy homeostasis. Induces transcription of mating-type proteins ALPHA1 and ALPHA2 and moderately represses transcription of mating-type protein A1 in response to hemoglobin and growth signals. Involved in the induction of a high affinity fibronectin receptor by sub-inhibitory dosages of caspofungin. This is Adenylate kinase isoenzyme 6 homolog HBR1 (HBR1) from Candida albicans (strain SC5314 / ATCC MYA-2876) (Yeast).